The sequence spans 125 residues: Small ribosomal subunit protein uS12 (125 aa).

The interval 9–28 (RSERSKLKKKTKSPALKQCP) is disordered. Position 89 is a 3-methylthioaspartic acid (aspartate 89). The segment at 104–125 (AQGVKDRKQGRSKYGTKRPKKA) is disordered. A compositionally biased stretch (basic residues) spans 113 to 125 (GRSKYGTKRPKKA).

This sequence belongs to the universal ribosomal protein uS12 family. In terms of assembly, part of the 30S ribosomal subunit. Contacts proteins S8 and S17. May interact with IF1 in the 30S initiation complex.

Its function is as follows. With S4 and S5 plays an important role in translational accuracy. Functionally, interacts with and stabilizes bases of the 16S rRNA that are involved in tRNA selection in the A site and with the mRNA backbone. Located at the interface of the 30S and 50S subunits, it traverses the body of the 30S subunit contacting proteins on the other side and probably holding the rRNA structure together. The combined cluster of proteins S8, S12 and S17 appears to hold together the shoulder and platform of the 30S subunit. The sequence is that of Small ribosomal subunit protein uS12 from Rippkaea orientalis (strain PCC 8801 / RF-1) (Cyanothece sp. (strain PCC 8801)).